A 457-amino-acid chain; its full sequence is tRNA-2-methylthio-N(6)-dimethylallyladenosine synthase (457 aa).

The region spanning 3–120 (KKVYVKTFGC…LPQMIDARRT (118 aa)) is the MTTase N-terminal domain. [4Fe-4S] cluster is bound by residues Cys12, Cys49, Cys83, Cys157, Cys161, and Cys164. Residues 143 to 377 (RVEGPTAFVS…QATIEENVAR (235 aa)) form the Radical SAM core domain. The TRAM domain maps to 380 to 447 (QSMVGKVERI…PHSLRGELVL (68 aa)).

Belongs to the methylthiotransferase family. MiaB subfamily. In terms of assembly, monomer. [4Fe-4S] cluster is required as a cofactor.

It localises to the cytoplasm. The enzyme catalyses N(6)-dimethylallyladenosine(37) in tRNA + (sulfur carrier)-SH + AH2 + 2 S-adenosyl-L-methionine = 2-methylsulfanyl-N(6)-dimethylallyladenosine(37) in tRNA + (sulfur carrier)-H + 5'-deoxyadenosine + L-methionine + A + S-adenosyl-L-homocysteine + 2 H(+). In terms of biological role, catalyzes the methylthiolation of N6-(dimethylallyl)adenosine (i(6)A), leading to the formation of 2-methylthio-N6-(dimethylallyl)adenosine (ms(2)i(6)A) at position 37 in tRNAs that read codons beginning with uridine. This Burkholderia multivorans (strain ATCC 17616 / 249) protein is tRNA-2-methylthio-N(6)-dimethylallyladenosine synthase.